Here is a 499-residue protein sequence, read N- to C-terminus: Probable folate-biopterin transporter 2 (499 aa).

12 consecutive transmembrane segments (helical) span residues 43–63 (WSFV…GGSL), 92–112 (IPWI…IFGF), 116–136 (PYFI…SLHS), 141–161 (YLAL…DVTI), 185–205 (LSSS…VHLV), 209–229 (GVFG…IVFS), 266–286 (LYMY…FYWF), 302–322 (FILS…QLVL), 330–350 (LCLW…ILVF), 354–374 (LKFG…SQMI), 399–419 (FALL…LGGI), and 435–455 (WLAV…LFLV).

It belongs to the major facilitator superfamily. Folate-biopterin transporter (TC 2.A.71) family.

It localises to the membrane. Could mediate folate transport. The chain is Probable folate-biopterin transporter 2 from Arabidopsis thaliana (Mouse-ear cress).